Here is a 218-residue protein sequence, read N- to C-terminus: Glutathione S-transferase Mu 1 (218 aa).

The GST N-terminal domain maps to 2 to 88; sequence PMTLGYWDIR…YIARKHNLCG (87 aa). 7 to 8 contributes to the glutathione binding site; it reads YW. Residue T34 is modified to Phosphothreonine. Residues 43 to 46, K50, 59 to 60, and 72 to 73 contribute to the glutathione site; these read RSQW, NL, and QS. One can recognise a GST C-terminal domain in the interval 90-208; the sequence is TEEEKIRVDI…KSSRFLPKPL (119 aa). Y116 contacts substrate.

Belongs to the GST superfamily. Mu family. As to quaternary structure, homodimer.

It localises to the cytoplasm. The catalysed reaction is RX + glutathione = an S-substituted glutathione + a halide anion + H(+). It carries out the reaction prostaglandin A2 + glutathione = prostaglandin A2-S-(R)-glutathione. It catalyses the reaction prostaglandin J2 + glutathione = prostaglandin J2-S-(R)-glutathione. The enzyme catalyses prostaglandin J2 + glutathione = prostaglandin J2-S-(S)-glutathione. The catalysed reaction is prostaglandin A2 + glutathione = prostaglandin A2-S-(S)-glutathione. It carries out the reaction 11(S)-hydroxy-14(S),15(S)-epoxy-(5Z,8Z,12E)-eicosatrienoate + glutathione = (11S,15S)-dihydroxy-14(R)-S-glutathionyl-(5Z,8Z,12E)-eicosatrienoate. Functionally, conjugation of reduced glutathione to a wide number of exogenous and endogenous hydrophobic electrophiles. Involved in the formation of glutathione conjugates of both prostaglandin A2 (PGA2) and prostaglandin J2 (PGJ2). Participates in the formation of novel hepoxilin regioisomers. The polypeptide is Glutathione S-transferase Mu 1 (GSTM1) (Macaca fascicularis (Crab-eating macaque)).